Reading from the N-terminus, the 261-residue chain is Zinc finger protein 664 (261 aa).

9 consecutive C2H2-type zinc fingers follow at residues 3–25, 31–53, 59–81, 87–109, 115–137, 143–165, 171–193, 199–221, and 227–249; these read YKCPMCREFFSERADLFMHQKVH, HKCDKCDKGFFHISELHIHWRDH, YKCDDCGKDFSTTTKLNRHKKIH, YKCYECGKAFNWSPHLQIHMRVH, YVCSECGRGFSNSSNLCMHQRVH, FKCEECGKAFRHTSSLCMHQRVH, YKCYECGKAFSQSSSLCIHQRVH, YRCCGCGKAFSQSSSLCIHQRVH, and FKCDECGKAFSQSTSLCIHQRVH. A Glycyl lysine isopeptide (Lys-Gly) (interchain with G-Cter in SUMO2) cross-link involves residue lysine 257.

The protein belongs to the krueppel C2H2-type zinc-finger protein family. As to expression, expressed in the organ of Corti, stria vascularis, auditory nerve and retina. Lower levels in the tongue, cerebellum, small intestine and kidney.

It localises to the nucleus. May be involved in transcriptional regulation. This is Zinc finger protein 664 (ZNF664) from Cavia porcellus (Guinea pig).